Consider the following 322-residue polypeptide: Dioxygenase himG (322 aa).

The Fe cation site is built by His-148 and His-229.

This sequence belongs to the PhyH family. Homodimer. Fe cation is required as a cofactor.

It participates in secondary metabolite biosynthesis. Functionally, polyketide synthase-nonribosomal peptide synthetase; part of the him gene cluster that mediates the biosynthesis of himeic acid A, a ubiquitin-activating enzyme (E1) inhibitor. First, himA, together with the trans-enoyl reductase himH, catalyzes the formation of apolyketide chain, which is then condensed with leucine by the NRPS activity of himA. Dieckmann cyclization and release from himA gives a tetramic acid intermediate as the product of himA PKS-NRPS. HimG then catalyzes alpha-oxidation of the tetramic acid ring, with a subsequent rearrangement to yield apyrone intermediate. Two terminal methyl groups of polyketide and amide side chains are oxidized to carboxylic acids by himC cytochrome P450 monooxygenase to form himeic acid A. Himeic acid A is further converted to himeic acid B and C during culture growth. No gene responsible for pyrone to pyridone conversion was found in the him gene cluster and himeic acid A is non-enzymatically converted to himeic acid C by the incorporation of an ammonium nitrogen atom in a pH5 buffer, and to himeic acid B at a conversion ratio of 50% during incubation in MeOH for 5 days. The chain is Dioxygenase himG from Aspergillus japonicus.